A 198-amino-acid polypeptide reads, in one-letter code: Inner membrane-spanning protein YciB (198 aa).

5 helical membrane-spanning segments follow: residues 36 to 56, 67 to 87, 90 to 110, 133 to 153, and 162 to 182; these read IFSA…ILYL, LTLV…SETF, WKAP…HFIG, LNIA…YVAF, and FKVF…GIYL.

It belongs to the YciB family.

The protein resides in the cell inner membrane. Plays a role in cell envelope biogenesis, maintenance of cell envelope integrity and membrane homeostasis. This Pseudomonas savastanoi pv. phaseolicola (strain 1448A / Race 6) (Pseudomonas syringae pv. phaseolicola (strain 1448A / Race 6)) protein is Inner membrane-spanning protein YciB.